The primary structure comprises 337 residues: Glycerol-3-phosphate dehydrogenase [NAD(P)+] (337 aa).

Ser17, Tyr18, His38, and Lys112 together coordinate NADPH. Sn-glycerol 3-phosphate contacts are provided by Lys112, Gly141, and Thr143. Ala145 contacts NADPH. Lys197, Asp250, Ser260, Arg261, and Asn262 together coordinate sn-glycerol 3-phosphate. Lys197 (proton acceptor) is an active-site residue. Position 261 (Arg261) interacts with NADPH. The NADPH site is built by Val285 and Glu287.

Belongs to the NAD-dependent glycerol-3-phosphate dehydrogenase family.

It is found in the cytoplasm. The catalysed reaction is sn-glycerol 3-phosphate + NAD(+) = dihydroxyacetone phosphate + NADH + H(+). It catalyses the reaction sn-glycerol 3-phosphate + NADP(+) = dihydroxyacetone phosphate + NADPH + H(+). The protein operates within membrane lipid metabolism; glycerophospholipid metabolism. Functionally, catalyzes the reduction of the glycolytic intermediate dihydroxyacetone phosphate (DHAP) to sn-glycerol 3-phosphate (G3P), the key precursor for phospholipid synthesis. The chain is Glycerol-3-phosphate dehydrogenase [NAD(P)+] from Pasteurella multocida (strain Pm70).